We begin with the raw amino-acid sequence, 154 residues long: SsrA-binding protein (154 aa).

Belongs to the SmpB family.

It is found in the cytoplasm. Required for rescue of stalled ribosomes mediated by trans-translation. Binds to transfer-messenger RNA (tmRNA), required for stable association of tmRNA with ribosomes. tmRNA and SmpB together mimic tRNA shape, replacing the anticodon stem-loop with SmpB. tmRNA is encoded by the ssrA gene; the 2 termini fold to resemble tRNA(Ala) and it encodes a 'tag peptide', a short internal open reading frame. During trans-translation Ala-aminoacylated tmRNA acts like a tRNA, entering the A-site of stalled ribosomes, displacing the stalled mRNA. The ribosome then switches to translate the ORF on the tmRNA; the nascent peptide is terminated with the 'tag peptide' encoded by the tmRNA and targeted for degradation. The ribosome is freed to recommence translation, which seems to be the essential function of trans-translation. In Synechocystis sp. (strain ATCC 27184 / PCC 6803 / Kazusa), this protein is SsrA-binding protein.